The following is a 258-amino-acid chain: Type II restriction enzyme HincII (258 aa).

It catalyses the reaction Endonucleolytic cleavage of DNA to give specific double-stranded fragments with terminal 5'-phosphates.. Its function is as follows. A P subtype restriction enzyme that recognizes the double-stranded sequence 5'-GTYRAC-3' and cleaves after Y-3. In Haemophilus influenzae, this protein is Type II restriction enzyme HincII (hincIIR).